Reading from the N-terminus, the 283-residue chain is Secretory carrier-associated membrane protein 2 (283 aa).

Residues 1-47 (MARHDPNPFADEEINPFANHTSVPPASNSYLKPLPPEPYDRGATVDI) are disordered. Residues 1–123 (MARHDPNPFA…LQKIQYVAFT (123 aa)) lie on the Cytoplasmic side of the membrane. Residues 18–30 (ANHTSVPPASNSY) show a composition bias toward polar residues. Positions 50-87 (DSGNDLRAKEMELQAKENELKRKEQELKRREDAIARTG) form a coiled coil. 4 helical membrane-spanning segments follow: residues 124–144 (TLLG…VAWI), 151–171 (IWLL…VLWY), 186–206 (FGAF…AAVA), and 234–254 (IMYF…IWVI). Residues 255 to 283 (QQVYAYFRGSGKAAEMKREATKSTLMRAL) are Cytoplasmic-facing.

Belongs to the SCAMP family.

Its subcellular location is the cell membrane. It localises to the cytoplasmic vesicle. It is found in the secretory vesicle membrane. Probably involved in membrane trafficking. In Arabidopsis thaliana (Mouse-ear cress), this protein is Secretory carrier-associated membrane protein 2 (SCAMP2).